A 125-amino-acid polypeptide reads, in one-letter code: Apoptosis inhibitor Rv3655c (125 aa).

The first 33 residues, 1-33 (MEAALAIATLVLVLVLCLAGVTAVSMQVRCIDA), serve as a signal peptide directing secretion.

Interacts with human E3 ubiquitin-protein ligase RNF213.

Its subcellular location is the secreted. The protein resides in the host cytoplasm. Its function is as follows. Effector protein that participates in the suppression of macrophage apoptosis by blocking the extrinsic pathway. Interferes with caspase-8 activation and binds to the host E3 ubiquitin-protein ligase RNF213, whose fusion partners have anti-apoptotic function. The sequence is that of Apoptosis inhibitor Rv3655c from Mycobacterium tuberculosis (strain ATCC 25618 / H37Rv).